The sequence spans 204 residues: Large ribosomal subunit protein uL22c (204 aa).

The protein belongs to the universal ribosomal protein uL22 family. As to quaternary structure, part of the 50S ribosomal subunit.

The protein resides in the plastid. The protein localises to the chloroplast. This protein binds specifically to 23S rRNA. In terms of biological role, the globular domain of the protein is located near the polypeptide exit tunnel on the outside of the subunit, while an extended beta-hairpin is found that lines the wall of the exit tunnel in the center of the 70S ribosome. This is Large ribosomal subunit protein uL22c (rpl22) from Pisum sativum (Garden pea).